The chain runs to 340 residues: MYG1 protein C27H6.8 (340 aa).

It belongs to the MYG1 family.

This chain is MYG1 protein C27H6.8, found in Caenorhabditis elegans.